The sequence spans 406 residues: MAYVLVLNSGSSSVKFQLVDPESSATDTPLVSGLVEQVGEPQGAVTVKTGGEEFKEELEIPTHSFGLDRAFSIMHEHGVGPTDVEVIAVGHRVVHGGRLFSEPQLIVDQIESMIEDLIPLAPLHNPANLDGIRVARKLLPEIPHVAVFDTAFFNHMPPAAALYAINNDVASQYDIRRYGFHGTSHEFVSQQVPKLLDRDPGHVHQITLHLGNGASAAAIRNGRPIDTSMGLTPLAGLAMGTRSGDIDPGIIFHLSREAGMSIDEIDNLLNKRSGVKGIAGVNDFRVLRERINNEDQDAWLAYNIYIHQLRRFIGAYMIALGRVDAITFTAGVGENDTEVRQDSLYNLDMYGIDFDKEANLVRSKEPRMISTADSQVKVFVVPTNEELAIAQKSAGIAAMAREAGLY.

N8 contacts Mg(2+). K15 is an ATP binding site. Residue R92 coordinates substrate. The Proton donor/acceptor role is filled by D149. ATP-binding positions include 209–213 (HLGNG), 283–285 (DFR), and 331–335 (GVGEN). E385 contacts Mg(2+).

The protein belongs to the acetokinase family. In terms of assembly, homodimer. It depends on Mg(2+) as a cofactor. Mn(2+) serves as cofactor.

It localises to the cytoplasm. The catalysed reaction is acetate + ATP = acetyl phosphate + ADP. The protein operates within metabolic intermediate biosynthesis; acetyl-CoA biosynthesis; acetyl-CoA from acetate: step 1/2. Catalyzes the formation of acetyl phosphate from acetate and ATP. Can also catalyze the reverse reaction. In Corynebacterium aurimucosum (strain ATCC 700975 / DSM 44827 / CIP 107346 / CN-1) (Corynebacterium nigricans), this protein is Acetate kinase.